A 113-amino-acid polypeptide reads, in one-letter code: Ribonuclease P protein component (113 aa).

This sequence belongs to the RnpA family. Consists of a catalytic RNA component (M1 or rnpB) and a protein subunit.

It catalyses the reaction Endonucleolytic cleavage of RNA, removing 5'-extranucleotides from tRNA precursor.. In terms of biological role, RNaseP catalyzes the removal of the 5'-leader sequence from pre-tRNA to produce the mature 5'-terminus. It can also cleave other RNA substrates such as 4.5S RNA. The protein component plays an auxiliary but essential role in vivo by binding to the 5'-leader sequence and broadening the substrate specificity of the ribozyme. This Geotalea uraniireducens (strain Rf4) (Geobacter uraniireducens) protein is Ribonuclease P protein component.